We begin with the raw amino-acid sequence, 190 residues long: Xanthine phosphoribosyltransferase (190 aa).

Xanthine is bound by residues leucine 20 and asparagine 27. 128–132 (ANGKA) is a 5-phospho-alpha-D-ribose 1-diphosphate binding site. Lysine 156 lines the xanthine pocket.

The protein belongs to the purine/pyrimidine phosphoribosyltransferase family. Xpt subfamily. In terms of assembly, homodimer.

The protein localises to the cytoplasm. It catalyses the reaction XMP + diphosphate = xanthine + 5-phospho-alpha-D-ribose 1-diphosphate. The protein operates within purine metabolism; XMP biosynthesis via salvage pathway; XMP from xanthine: step 1/1. Converts the preformed base xanthine, a product of nucleic acid breakdown, to xanthosine 5'-monophosphate (XMP), so it can be reused for RNA or DNA synthesis. The chain is Xanthine phosphoribosyltransferase from Pseudomonas entomophila (strain L48).